The chain runs to 436 residues: GTPase Der (436 aa).

EngA-type G domains lie at 4–167 (PVVA…PKEE) and 176–351 (VKFS…DNHS). Residues 10-17 (GRPNVGKS), 57-61 (DTGGI), 119-122 (NKVD), 182-189 (GRPNVGKS), 229-233 (DTAGM), and 294-297 (NKWD) contribute to the GTP site. Residues 352-436 (LRVQSSMLND…PIRVIARKRK (85 aa)) enclose the KH-like domain.

It belongs to the TRAFAC class TrmE-Era-EngA-EngB-Septin-like GTPase superfamily. EngA (Der) GTPase family. As to quaternary structure, associates with the 50S ribosomal subunit.

In terms of biological role, GTPase that plays an essential role in the late steps of ribosome biogenesis. The polypeptide is GTPase Der (Listeria monocytogenes serotype 4b (strain F2365)).